The following is a 285-amino-acid chain: Bifunctional protein FolD (285 aa).

NADP(+) contacts are provided by residues 166-168 (GAS) and Ile232.

This sequence belongs to the tetrahydrofolate dehydrogenase/cyclohydrolase family. As to quaternary structure, homodimer.

The enzyme catalyses (6R)-5,10-methylene-5,6,7,8-tetrahydrofolate + NADP(+) = (6R)-5,10-methenyltetrahydrofolate + NADPH. It catalyses the reaction (6R)-5,10-methenyltetrahydrofolate + H2O = (6R)-10-formyltetrahydrofolate + H(+). The protein operates within one-carbon metabolism; tetrahydrofolate interconversion. Its activity is regulated as follows. The NAD(+)-dependent dehydrogenase is activated by inorganic phosphate. Functionally, catalyzes the oxidation of 5,10-methylenetetrahydrofolate to 5,10-methenyltetrahydrofolate and then the hydrolysis of 5,10-methenyltetrahydrofolate to 10-formyltetrahydrofolate. The protein is Bifunctional protein FolD of Photobacterium phosphoreum.